The following is a 322-amino-acid chain: Phosphatidylserine decarboxylase proenzyme (322 aa).

Active-site charge relay system; for autoendoproteolytic cleavage activity residues include Asp-90, His-147, and Ser-254. The Schiff-base intermediate with substrate; via pyruvic acid; for decarboxylase activity role is filled by Ser-254. A Pyruvic acid (Ser); by autocatalysis modification is found at Ser-254. Residues Glu-294–Thr-322 form a disordered region. The segment covering Asp-303–Thr-322 has biased composition (basic and acidic residues).

It belongs to the phosphatidylserine decarboxylase family. PSD-B subfamily. Prokaryotic type I sub-subfamily. In terms of assembly, heterodimer of a large membrane-associated beta subunit and a small pyruvoyl-containing alpha subunit. Pyruvate is required as a cofactor. Is synthesized initially as an inactive proenzyme. Formation of the active enzyme involves a self-maturation process in which the active site pyruvoyl group is generated from an internal serine residue via an autocatalytic post-translational modification. Two non-identical subunits are generated from the proenzyme in this reaction, and the pyruvate is formed at the N-terminus of the alpha chain, which is derived from the carboxyl end of the proenzyme. The autoendoproteolytic cleavage occurs by a canonical serine protease mechanism, in which the side chain hydroxyl group of the serine supplies its oxygen atom to form the C-terminus of the beta chain, while the remainder of the serine residue undergoes an oxidative deamination to produce ammonia and the pyruvoyl prosthetic group on the alpha chain. During this reaction, the Ser that is part of the protease active site of the proenzyme becomes the pyruvoyl prosthetic group, which constitutes an essential element of the active site of the mature decarboxylase.

The protein localises to the cell membrane. It carries out the reaction a 1,2-diacyl-sn-glycero-3-phospho-L-serine + H(+) = a 1,2-diacyl-sn-glycero-3-phosphoethanolamine + CO2. It participates in phospholipid metabolism; phosphatidylethanolamine biosynthesis; phosphatidylethanolamine from CDP-diacylglycerol: step 2/2. Functionally, catalyzes the formation of phosphatidylethanolamine (PtdEtn) from phosphatidylserine (PtdSer). In Salmonella paratyphi C (strain RKS4594), this protein is Phosphatidylserine decarboxylase proenzyme.